We begin with the raw amino-acid sequence, 253 residues long: Small ribosomal subunit protein uS2 (253 aa).

It belongs to the universal ribosomal protein uS2 family.

This is Small ribosomal subunit protein uS2 from Hahella chejuensis (strain KCTC 2396).